Consider the following 275-residue polypeptide: Undecaprenyl-diphosphatase (275 aa).

8 helical membrane-spanning segments follow: residues I4 to P24, L54 to L74, L92 to Y112, Y123 to D143, I154 to F174, A194 to L214, M228 to W248, and S255 to I275.

The protein belongs to the UppP family.

It is found in the cell membrane. It carries out the reaction di-trans,octa-cis-undecaprenyl diphosphate + H2O = di-trans,octa-cis-undecaprenyl phosphate + phosphate + H(+). Functionally, catalyzes the dephosphorylation of undecaprenyl diphosphate (UPP). Confers resistance to bacitracin. The chain is Undecaprenyl-diphosphatase from Baumannia cicadellinicola subsp. Homalodisca coagulata.